The primary structure comprises 218 residues: MDKSESTSAGRNRRRRPRRGSRSASSSADANFRVLSQQLSRLNKTLAAGRPTINHPTFVGSERCKPGYTFSSITLNPPKIDRGSYYGKRLLLPDSVTEFDKKLVSRIQIRVNPLPKFDSTVWVTVRKVPASSDLSVAAISAMFADGASPVLVYQYAASGVQANNKLLYDLSAMRADIGDMRKYAVLVYSKDDALETDELVLHVDVEHQRIPTSGVLPV.

At Met-1 the chain carries N-acetylmethionine; by host. The segment covering 1–10 (MDKSESTSAG) has biased composition (low complexity). The disordered stretch occupies residues 1–29 (MDKSESTSAGRNRRRRPRRGSRSASSSAD). Residues 11-21 (RNRRRRPRRGS) show a composition bias toward basic residues.

This sequence belongs to the cucumovirus capsid protein family.

The protein localises to the virion. Functionally, capsid protein. Probably binds RNA and plays a role in packaging. In Cucumis sativus (Cucumber), this protein is Capsid protein.